A 180-amino-acid polypeptide reads, in one-letter code: Large ribosomal subunit protein uL6 (180 aa).

The protein belongs to the universal ribosomal protein uL6 family. Part of the 50S ribosomal subunit.

This protein binds to the 23S rRNA, and is important in its secondary structure. It is located near the subunit interface in the base of the L7/L12 stalk, and near the tRNA binding site of the peptidyltransferase center. The chain is Large ribosomal subunit protein uL6 from Borrelia recurrentis (strain A1).